A 500-amino-acid polypeptide reads, in one-letter code: MANIINLWNGIVPTVQDVNVASITAFKSMIDETWDKKIEANTCISRKHRNIIHEVIRDFMKAYPKMDENKKSPLGAPMQWLTQYYILKNEYHKTMLAYDNGSLNTKFKTLNIYMITNVGQYILYIVFCIISGKNHDGTPYIYDSEITSNDKNFINERIKYACKQILHGQLTIALRIRNKFMFIGSPMYLWFNVNGSQVYHDIYDRNAGFHNKEIGRLLYAFMYYLSISGRFLNDFALLKFTYLGESWTFSLSVPEYILYGLGYSVFDTIEKFSNDAILVYIRTNNRNGYDYVEFNKKGIAKVTEDKPDNDKRIHAIRLINDSTDVQHIHFGFRNMVIIDNECANIQSSAENATDTGHHQDSKINIEVEDDVIDDDDYNPKPTPIPEPHPRPPFPRHEYHKRPKLLPVEEPDPVKKDADRIRLDNHILNTLDHNLNFIGHYCCDTAAVDRLEHHIETLGQYAVILARKINMQTLLFPWPLPTVHPHAIDGSIPPHGRSTIL.

A disulfide bridge connects residues C43 and C342.

This sequence belongs to the orthopoxvirus OPG153 protein family. In terms of assembly, interacts with proteins OPG094 and OPG143. Interacts with OPG154. Interacts with OPG152. Interacts with host laminin.

The protein resides in the virion membrane. Envelop protein that mediates acid-dependent endocytosis into host cells. Plays an important role in endocytic entry of the virus by acting as an acid-sensitive membrane fusion suppressor. Low pH in host endosomes triggers conformational changes to allow de-repression of viral fusion complex activity and membrane fusion within vesicles. Also plays a role in bridging the mature virion with structural protein OPG152. The chain is Envelop protein OPG153 (OPG153) from Vaccinia virus (strain Western Reserve) (VACV).